The sequence spans 200 residues: Mediator of RNA polymerase II transcription subunit 29 (200 aa).

Composition is skewed to low complexity over residues 1–21 (MAASQQQASAASSAAGVSGPS) and 36–48 (AQLVGPAQSGLLQ). Residues 1–48 (MAASQQQASAASSAAGVSGPSSAGGPGPQQQPQPPAQLVGPAQSGLLQ) are disordered. N-acetylalanine is present on Ala-2.

The protein belongs to the Mediator complex subunit 29 family. In terms of assembly, component of the Mediator complex, which is composed of MED1, MED4, MED6, MED7, MED8, MED9, MED10, MED11, MED12, MED13, MED13L, MED14, MED15, MED16, MED17, MED18, MED19, MED20, MED21, MED22, MED23, MED24, MED25, MED26, MED27, MED29, MED30, MED31, CCNC, CDK8 and CDC2L6/CDK11. The MED12, MED13, CCNC and CDK8 subunits form a distinct module termed the CDK8 module. Mediator containing the CDK8 module is less active than Mediator lacking this module in supporting transcriptional activation. Individual preparations of the Mediator complex lacking one or more distinct subunits have been variously termed ARC, CRSP, DRIP, PC2, SMCC and TRAP. Associates with the MED18/MED20 heteromer.

It localises to the nucleus. Its function is as follows. Component of the Mediator complex, a coactivator involved in the regulated transcription of nearly all RNA polymerase II-dependent genes. Mediator functions as a bridge to convey information from gene-specific regulatory proteins to the basal RNA polymerase II transcription machinery. Mediator is recruited to promoters by direct interactions with regulatory proteins and serves as a scaffold for the assembly of a functional preinitiation complex with RNA polymerase II and the general transcription factors. In Pongo abelii (Sumatran orangutan), this protein is Mediator of RNA polymerase II transcription subunit 29 (MED29).